The chain runs to 136 residues: Histone H3.1t (136 aa).

Positions 1–43 (MARTKQTARKSTGGKAPRKQLATKVARKSAPATGGVKKPHRYR) are disordered. Arginine 3 carries the asymmetric dimethylarginine; by PRMT6; alternate modification. Arginine 3 is modified (citrulline; alternate). Threonine 4 carries the post-translational modification Phosphothreonine; by HASPIN. Lysine 5 carries the allysine; alternate modification. An N6,N6,N6-trimethyllysine; alternate modification is found at lysine 5. Lysine 5 carries the N6,N6-dimethyllysine; alternate modification. N6-(2-hydroxyisobutyryl)lysine; alternate is present on lysine 5. An N6-(beta-hydroxybutyryl)lysine; alternate modification is found at lysine 5. The residue at position 5 (lysine 5) is an N6-acetyllysine; alternate. Lysine 5 carries the post-translational modification N6-methyllysine; alternate. 5-glutamyl dopamine; alternate is present on glutamine 6. A 5-glutamyl serotonin; alternate modification is found at glutamine 6. Threonine 7 is modified (phosphothreonine; by PKC). Arginine 9 carries the citrulline; alternate modification. Arginine 9 carries the symmetric dimethylarginine; by PRMT5; alternate modification. Lysine 10 carries the post-translational modification N6,N6,N6-trimethyllysine; alternate. Lysine 10 carries the N6,N6-dimethyllysine; alternate modification. Lysine 10 is modified (N6-(2-hydroxyisobutyryl)lysine; alternate). N6-(beta-hydroxybutyryl)lysine; alternate is present on lysine 10. Lysine 10 is subject to N6-acetyllysine; alternate. Lysine 10 is modified (N6-methyllysine; alternate). An N6-lactoyllysine; alternate modification is found at lysine 10. Residue serine 11 is modified to ADP-ribosylserine; alternate. Serine 11 carries the phosphoserine; alternate; by AURKB, AURKC, RPS6KA3, RPS6KA4 and RPS6KA5 modification. Position 12 is a phosphothreonine; by PKC (threonine 12). Position 15 is an N6-(2-hydroxyisobutyryl)lysine; alternate (lysine 15). Lysine 15 bears the N6-(beta-hydroxybutyryl)lysine; alternate mark. Lysine 15 is subject to N6-acetyllysine; alternate. Lysine 15 bears the N6-lactoyllysine; alternate mark. Lysine 15 carries the N6-glutaryllysine; alternate modification. Residue lysine 15 is modified to N6-succinyllysine; alternate. Arginine 18 is subject to Citrulline; alternate. Arginine 18 is modified (asymmetric dimethylarginine; by CARM1; alternate). Residues lysine 19 and lysine 24 each carry the N6-(2-hydroxyisobutyryl)lysine; alternate modification. Residues lysine 19 and lysine 24 each carry the N6-(beta-hydroxybutyryl)lysine; alternate modification. N6-acetyllysine; alternate occurs at positions 19 and 24. 2 positions are modified to N6-methyllysine; alternate: lysine 19 and lysine 24. N6-lactoyllysine; alternate is present on residues lysine 19 and lysine 24. 2 positions are modified to N6-glutaryllysine; alternate: lysine 19 and lysine 24. Lysine 19 and lysine 24 each carry N6-butyryllysine; alternate. Arginine 27 carries the citrulline modification. Lysine 28 is modified (N6,N6,N6-trimethyllysine; alternate). Residue lysine 28 is modified to N6,N6-dimethyllysine; alternate. Position 28 is an N6-(2-hydroxyisobutyryl)lysine; alternate (lysine 28). Lysine 28 is modified (N6-acetyllysine; alternate). Position 28 is an N6-methyllysine; alternate (lysine 28). Residue lysine 28 is modified to N6-lactoyllysine; alternate. An N6-glutaryllysine; alternate modification is found at lysine 28. Serine 29 is subject to ADP-ribosylserine; alternate. At serine 29 the chain carries Phosphoserine; alternate; by AURKB, AURKC and RPS6KA5. Lysine 37 bears the N6,N6,N6-trimethyllysine; alternate mark. N6,N6-dimethyllysine; alternate is present on lysine 37. Lysine 37 carries the post-translational modification N6-(2-hydroxyisobutyryl)lysine; alternate. Lysine 37 is subject to N6-acetyllysine; alternate. At lysine 37 the chain carries N6-methyllysine; alternate. N6-methyllysine is present on lysine 38. Tyrosine 42 carries the phosphotyrosine modification. Lysine 57 bears the N6,N6,N6-trimethyllysine; alternate mark. Lysine 57 carries the N6-(2-hydroxyisobutyryl)lysine; alternate modification. At lysine 57 the chain carries N6-(beta-hydroxybutyryl)lysine; alternate. Lysine 57 is subject to N6-acetyllysine; alternate. An N6-lactoyllysine; alternate modification is found at lysine 57. Lysine 57 is subject to N6-glutaryllysine; alternate. The residue at position 57 (lysine 57) is an N6-succinyllysine; alternate. Lysine 57 carries the N6-methyllysine; by EHMT2; alternate modification. Phosphoserine is present on serine 58. Residues lysine 65 and lysine 80 each carry the N6-(2-hydroxyisobutyryl)lysine; alternate modification. Lysine 65 and lysine 80 each carry N6-methyllysine; alternate. At lysine 80 the chain carries N6,N6,N6-trimethyllysine; alternate. Lysine 80 carries the N6,N6-dimethyllysine; alternate modification. N6-acetyllysine; alternate is present on lysine 80. At lysine 80 the chain carries N6-lactoyllysine; alternate. The residue at position 80 (lysine 80) is an N6-glutaryllysine; alternate. Lysine 80 carries the post-translational modification N6-succinyllysine; alternate. The residue at position 81 (threonine 81) is a Phosphothreonine. The residue at position 87 (serine 87) is a Phosphoserine. Phosphothreonine is present on threonine 108. N6-acetyllysine; alternate occurs at positions 116 and 123. N6-glutaryllysine; alternate is present on residues lysine 116 and lysine 123. N6-(2-hydroxyisobutyryl)lysine; alternate is present on lysine 123. An N6-methyllysine; alternate modification is found at lysine 123. Position 123 is an N6-succinyllysine; alternate (lysine 123).

This sequence belongs to the histone H3 family. As to quaternary structure, the nucleosome is a histone octamer containing two molecules each of H2A, H2B, H3 and H4 assembled in one H3-H4 heterotetramer and two H2A-H2B heterodimers. The octamer wraps approximately 147 bp of DNA. Interacts with TONSL; CHAF1A and CHAF1B. Acetylation is generally linked to gene activation. Acetylation on Lys-10 (H3K9ac) impairs methylation at Arg-9 (H3R8me2s). Acetylation on Lys-19 (H3K18ac) and Lys-24 (H3K24ac) favors methylation at Arg-18 (H3R17me). Acetylation at Lys-123 (H3K122ac) by EP300/p300 plays a central role in chromatin structure: localizes at the surface of the histone octamer and stimulates transcription, possibly by promoting nucleosome instability. In terms of processing, citrullination at Arg-9 (H3R8ci) and/or Arg-18 (H3R17ci) by PADI4 impairs methylation and represses transcription. Post-translationally, asymmetric dimethylation at Arg-18 (H3R17me2a) by CARM1 is linked to gene activation. Symmetric dimethylation at Arg-9 (H3R8me2s) by PRMT5 is linked to gene repression. Asymmetric dimethylation at Arg-3 (H3R2me2a) by PRMT6 is linked to gene repression and is mutually exclusive with H3 Lys-5 methylation (H3K4me2 and H3K4me3). H3R2me2a is present at the 3' of genes regardless of their transcription state and is enriched on inactive promoters, while it is absent on active promoters. Methylation at Lys-5 (H3K4me), Lys-37 (H3K36me) and Lys-80 (H3K79me) are linked to gene activation. Methylation at Lys-5 (H3K4me) facilitates subsequent acetylation of H3 and H4. Methylation at Lys-80 (H3K79me) is associated with DNA double-strand break (DSB) responses and is a specific target for TP53BP1. Methylation at Lys-10 (H3K9me) and Lys-28 (H3K27me) are linked to gene repression. Methylation at Lys-10 (H3K9me) is a specific target for HP1 proteins (CBX1, CBX3 and CBX5) and prevents subsequent phosphorylation at Ser-11 (H3S10ph) and acetylation of H3 and H4. Methylation at Lys-5 (H3K4me) and Lys-80 (H3K79me) require preliminary monoubiquitination of H2B at 'Lys-120'. Methylation at Lys-10 (H3K9me) and Lys-28 (H3K27me) are enriched in inactive X chromosome chromatin. Monomethylation at Lys-57 (H3K56me1) by EHMT2/G9A in G1 phase promotes interaction with PCNA and is required for DNA replication. In terms of processing, phosphorylated at Thr-4 (H3T3ph) by HASPIN during prophase and dephosphorylated during anaphase. Phosphorylation at Ser-11 (H3S10ph) by AURKB is crucial for chromosome condensation and cell-cycle progression during mitosis and meiosis. In addition phosphorylation at Ser-11 (H3S10ph) by RPS6KA4 and RPS6KA5 is important during interphase because it enables the transcription of genes following external stimulation, like mitogens, stress, growth factors or UV irradiation and result in the activation of genes, such as c-fos and c-jun. Phosphorylation at Ser-11 (H3S10ph), which is linked to gene activation, prevents methylation at Lys-10 (H3K9me) but facilitates acetylation of H3 and H4. Phosphorylation at Ser-11 (H3S10ph) by AURKB mediates the dissociation of HP1 proteins (CBX1, CBX3 and CBX5) from heterochromatin. Phosphorylation at Ser-11 (H3S10ph) is also an essential regulatory mechanism for neoplastic cell transformation. Phosphorylated at Ser-29 (H3S28ph) by MAP3K20 isoform 1, RPS6KA5 or AURKB during mitosis or upon ultraviolet B irradiation. Phosphorylation at Thr-7 (H3T6ph) by PRKCB is a specific tag for epigenetic transcriptional activation that prevents demethylation of Lys-5 (H3K4me) by LSD1/KDM1A. At centromeres, specifically phosphorylated at Thr-12 (H3T11ph) from prophase to early anaphase, by DAPK3 and PKN1. Phosphorylation at Thr-12 (H3T11ph) by PKN1 or isoform M2 of PKM (PKM2) is a specific tag for epigenetic transcriptional activation that promotes demethylation of Lys-10 (H3K9me) by KDM4C/JMJD2C. Phosphorylation at Tyr-42 (H3Y41ph) by JAK2 promotes exclusion of CBX5 (HP1 alpha) from chromatin. Post-translationally, ubiquitinated. Lysine deamination at Lys-5 (H3K4all) to form allysine is mediated by LOXL2. Allysine formation by LOXL2 only takes place on H3K4me3 and results in gene repression. In terms of processing, butyrylation of histones marks active promoters and competes with histone acetylation. It is present during late spermatogenesis. Post-translationally, succinylation at Lys-80 (H3K79succ) by KAT2A takes place with a maximum frequency around the transcription start sites of genes. It gives a specific tag for epigenetic transcription activation. Desuccinylation at Lys-123 (H3K122succ) by SIRT7 in response to DNA damage promotes chromatin condensation and double-strand breaks (DSBs) repair. Serine ADP-ribosylation constitutes the primary form of ADP-ribosylation of proteins in response to DNA damage. Serine ADP-ribosylation at Ser-11 (H3S10ADPr) is mutually exclusive with phosphorylation at Ser-11 (H3S10ph) and impairs acetylation at Lys-10 (H3K9ac). As to expression, expressed in testicular cells.

It is found in the nucleus. The protein resides in the chromosome. Its function is as follows. Core component of nucleosome. Nucleosomes wrap and compact DNA into chromatin, limiting DNA accessibility to the cellular machineries which require DNA as a template. Histones thereby play a central role in transcription regulation, DNA repair, DNA replication and chromosomal stability. DNA accessibility is regulated via a complex set of post-translational modifications of histones, also called histone code, and nucleosome remodeling. The sequence is that of Histone H3.1t from Homo sapiens (Human).